A 79-amino-acid polypeptide reads, in one-letter code: Cyclotide phyb-A (79 aa).

Positions 1–43 (MVGVNSLRSALYLIVLILFVQLTYFSDARVMDVDLSRAFLPLT) are excised as a propeptide. The segment at residues 44–73 (GIGCGESCVWIPCVSAAIGCSCSNKICYRN) is a cross-link (cyclopeptide (Gly-Asn)). Intrachain disulfides connect cysteine 47-cysteine 63, cysteine 51-cysteine 65, and cysteine 56-cysteine 70. A propeptide spanning residues 74–79 (GIIPKK) is cleaved from the precursor.

In terms of processing, this is a cyclic peptide. Post-translationally, contains 3 disulfide bonds. As to expression, expressed in midvein, lamina and periphery of leaves (at protein level).

In terms of biological role, probably participates in a plant defense mechanism. This is Cyclotide phyb-A from Petunia hybrida (Petunia).